We begin with the raw amino-acid sequence, 142 residues long: ATP synthase epsilon chain (142 aa).

This sequence belongs to the ATPase epsilon chain family. F-type ATPases have 2 components, CF(1) - the catalytic core - and CF(0) - the membrane proton channel. CF(1) has five subunits: alpha(3), beta(3), gamma(1), delta(1), epsilon(1). CF(0) has three main subunits: a, b and c.

Its subcellular location is the cell inner membrane. Produces ATP from ADP in the presence of a proton gradient across the membrane. The polypeptide is ATP synthase epsilon chain (Shewanella oneidensis (strain ATCC 700550 / JCM 31522 / CIP 106686 / LMG 19005 / NCIMB 14063 / MR-1)).